Here is a 380-residue protein sequence, read N- to C-terminus: MESEFPDTDEPVWILGRQHHLNEDKSKLLLDVSARLWFTYRRKFSPIGGTGPSSDAGWGCMLRCGQMMLAQALICRHLGRDWQWEKHKKQPEEYHRILHCFLDRKDCCYSIHQMAQMGVGEGKSIGEWFGPNTVAQVLKKLALFDEWNSLAVYVSMDNTVVIEDIKKMCRSPPQSSSTAHSSAHLHRSALGRNRNAAGLCTGWKPLLLIIPLRLGINHINPVYIDAFKECFKMPQSLGALGGKPNNAYYFIGFLGNELIYLDPHTTQSFVDSEENGTVDDQSFHCQQAPHRMKIMNLDPSVALGFFCKEECDFDNWCSLVQKEILKQQSLRMFELVQKHPPHWPPFIPPTKPEVTTTGAELIESTDKLFELEEEFEILSV.

Cysteine 60 functions as the Nucleophile in the catalytic mechanism. Active-site residues include aspartate 262 and histidine 264. The short motif at 375–378 (FEIL) is the LIR element.

The protein belongs to the peptidase C54 family.

It is found in the cytoplasm. It carries out the reaction [protein]-C-terminal L-amino acid-glycyl-phosphatidylethanolamide + H2O = [protein]-C-terminal L-amino acid-glycine + a 1,2-diacyl-sn-glycero-3-phosphoethanolamine. Cysteine protease that plays a key role in autophagy by mediating both proteolytic activation and delipidation of ATG8 family proteins. The protease activity is required for proteolytic activation of ATG8 family proteins: cleaves the C-terminal amino acid of ATG8 proteins to reveal a C-terminal glycine. Exposure of the glycine at the C-terminus is essential for ATG8 proteins conjugation to phosphatidylethanolamine (PE) and insertion to membranes, which is necessary for autophagy. Protease activity is also required to counteract formation of high-molecular weight conjugates of ATG8 proteins (ATG8ylation): acts as a deubiquitinating-like enzyme that removes ATG8 conjugated to other proteins, such as ATG3. In addition to the protease activity, also mediates delipidation of ATG8 family proteins. Catalyzes delipidation of PE-conjugated forms of ATG8 proteins during macroautophagy. This chain is Cysteine protease ATG4A, found in Gallus gallus (Chicken).